Here is a 130-residue protein sequence, read N- to C-terminus: Small ribosomal subunit protein uS8 (130 aa).

Belongs to the universal ribosomal protein uS8 family. As to quaternary structure, component of the 40S ribosomal subunit. Part of the small subunit (SSU) processome, composed of more than 70 proteins and the RNA chaperone small nucleolar RNA (snoRNA) U3.

It is found in the cytoplasm. It localises to the nucleus. The protein localises to the nucleolus. Functionally, component of the small ribosomal subunit. Part of the small subunit (SSU) processome, first precursor of the small eukaryotic ribosomal subunit. During the assembly of the SSU processome in the nucleolus, many ribosome biogenesis factors, an RNA chaperone and ribosomal proteins associate with the nascent pre-rRNA and work in concert to generate RNA folding, modifications, rearrangements and cleavage as well as targeted degradation of pre-ribosomal RNA by the RNA exosome. Required for erythropoiesis during embryonic development. The polypeptide is Small ribosomal subunit protein uS8 (Danio rerio (Zebrafish)).